A 441-amino-acid polypeptide reads, in one-letter code: Ribosomal protein uS12 methylthiotransferase RimO (441 aa).

One can recognise an MTTase N-terminal domain in the interval 7–117 (PKISFVSLGC…VLEAVHRARP (111 aa)). [4Fe-4S] cluster-binding residues include Cys16, Cys52, Cys81, Cys148, Cys152, and Cys155. The 238-residue stretch at 134-371 (LTPRHYAYLK…MARQQAISAR (238 aa)) folds into the Radical SAM core domain. Residues 374–440 (KRKVGTRQQV…AYDLHGTVAG (67 aa)) form the TRAM domain.

This sequence belongs to the methylthiotransferase family. RimO subfamily. Requires [4Fe-4S] cluster as cofactor.

Its subcellular location is the cytoplasm. It catalyses the reaction L-aspartate(89)-[ribosomal protein uS12]-hydrogen + (sulfur carrier)-SH + AH2 + 2 S-adenosyl-L-methionine = 3-methylsulfanyl-L-aspartate(89)-[ribosomal protein uS12]-hydrogen + (sulfur carrier)-H + 5'-deoxyadenosine + L-methionine + A + S-adenosyl-L-homocysteine + 2 H(+). In terms of biological role, catalyzes the methylthiolation of an aspartic acid residue of ribosomal protein uS12. This is Ribosomal protein uS12 methylthiotransferase RimO from Rhodopseudomonas palustris (strain ATCC BAA-98 / CGA009).